Consider the following 96-residue polypeptide: Nucleoid-associated protein CF0672 (96 aa).

This sequence belongs to the YbaB/EbfC family. Homodimer.

The protein localises to the cytoplasm. The protein resides in the nucleoid. Binds to DNA and alters its conformation. May be involved in regulation of gene expression, nucleoid organization and DNA protection. This Chlamydia felis (strain Fe/C-56) (Chlamydophila felis) protein is Nucleoid-associated protein CF0672.